A 391-amino-acid polypeptide reads, in one-letter code: Formate-dependent phosphoribosylglycinamide formyltransferase (391 aa).

N(1)-(5-phospho-beta-D-ribosyl)glycinamide is bound by residues 18–19 and glutamate 78; that span reads EL. Residues arginine 110, lysine 151, 156–161, 191–194, and glutamate 199 each bind ATP; these read SSGKGQ and EEFI. The ATP-grasp domain occupies 115-305; sequence DLASKDLKIK…EFELHLRAFL (191 aa). Glutamate 264 and glutamate 276 together coordinate Mg(2+). N(1)-(5-phospho-beta-D-ribosyl)glycinamide-binding positions include aspartate 283, lysine 353, and 360–361; that span reads RR.

The protein belongs to the PurK/PurT family. Homodimer.

The catalysed reaction is N(1)-(5-phospho-beta-D-ribosyl)glycinamide + formate + ATP = N(2)-formyl-N(1)-(5-phospho-beta-D-ribosyl)glycinamide + ADP + phosphate + H(+). It participates in purine metabolism; IMP biosynthesis via de novo pathway; N(2)-formyl-N(1)-(5-phospho-D-ribosyl)glycinamide from N(1)-(5-phospho-D-ribosyl)glycinamide (formate route): step 1/1. In terms of biological role, involved in the de novo purine biosynthesis. Catalyzes the transfer of formate to 5-phospho-ribosyl-glycinamide (GAR), producing 5-phospho-ribosyl-N-formylglycinamide (FGAR). Formate is provided by PurU via hydrolysis of 10-formyl-tetrahydrofolate. The sequence is that of Formate-dependent phosphoribosylglycinamide formyltransferase from Prochlorococcus marinus (strain AS9601).